Reading from the N-terminus, the 226-residue chain is Thymidylate kinase (226 aa).

16-23 (GIDGAGKT) is an ATP binding site.

Belongs to the thymidylate kinase family.

It carries out the reaction dTMP + ATP = dTDP + ADP. Functionally, phosphorylation of dTMP to form dTDP in both de novo and salvage pathways of dTTP synthesis. The sequence is that of Thymidylate kinase from Xanthomonas euvesicatoria pv. vesicatoria (strain 85-10) (Xanthomonas campestris pv. vesicatoria).